Reading from the N-terminus, the 202-residue chain is Ribosome maturation factor RimP (202 aa).

This sequence belongs to the RimP family.

It localises to the cytoplasm. Required for maturation of 30S ribosomal subunits. The polypeptide is Ribosome maturation factor RimP (Polaromonas naphthalenivorans (strain CJ2)).